The primary structure comprises 176 residues: Crossover junction endodeoxyribonuclease RuvC (176 aa).

Residues D7, E68, and D141 contribute to the active site. Residues D7, E68, and D141 each coordinate Mg(2+).

This sequence belongs to the RuvC family. As to quaternary structure, homodimer which binds Holliday junction (HJ) DNA. The HJ becomes 2-fold symmetrical on binding to RuvC with unstacked arms; it has a different conformation from HJ DNA in complex with RuvA. In the full resolvosome a probable DNA-RuvA(4)-RuvB(12)-RuvC(2) complex forms which resolves the HJ. The cofactor is Mg(2+).

The protein resides in the cytoplasm. The enzyme catalyses Endonucleolytic cleavage at a junction such as a reciprocal single-stranded crossover between two homologous DNA duplexes (Holliday junction).. In terms of biological role, the RuvA-RuvB-RuvC complex processes Holliday junction (HJ) DNA during genetic recombination and DNA repair. Endonuclease that resolves HJ intermediates. Cleaves cruciform DNA by making single-stranded nicks across the HJ at symmetrical positions within the homologous arms, yielding a 5'-phosphate and a 3'-hydroxyl group; requires a central core of homology in the junction. The consensus cleavage sequence is 5'-(A/T)TT(C/G)-3'. Cleavage occurs on the 3'-side of the TT dinucleotide at the point of strand exchange. HJ branch migration catalyzed by RuvA-RuvB allows RuvC to scan DNA until it finds its consensus sequence, where it cleaves and resolves the cruciform DNA. The polypeptide is Crossover junction endodeoxyribonuclease RuvC (Streptomyces avermitilis (strain ATCC 31267 / DSM 46492 / JCM 5070 / NBRC 14893 / NCIMB 12804 / NRRL 8165 / MA-4680)).